We begin with the raw amino-acid sequence, 260 residues long: Serine hydroxymethyltransferase (260 aa).

At Lys60 the chain carries N6-(pyridoxal phosphate)lysine.

Belongs to the SHMT family. Homodimer. It depends on pyridoxal 5'-phosphate as a cofactor.

The protein resides in the cytoplasm. The catalysed reaction is (6R)-5,10-methylene-5,6,7,8-tetrahydrofolate + glycine + H2O = (6S)-5,6,7,8-tetrahydrofolate + L-serine. The protein operates within one-carbon metabolism; tetrahydrofolate interconversion. Its pathway is amino-acid biosynthesis; glycine biosynthesis; glycine from L-serine: step 1/1. In terms of biological role, catalyzes the reversible interconversion of serine and glycine with tetrahydrofolate (THF) serving as the one-carbon carrier. This reaction serves as the major source of one-carbon groups required for the biosynthesis of purines, thymidylate, methionine, and other important biomolecules. Also exhibits THF-independent aldolase activity toward beta-hydroxyamino acids, producing glycine and aldehydes, via a retro-aldol mechanism. This chain is Serine hydroxymethyltransferase, found in Corynebacterium sp. (strain P-1).